The chain runs to 290 residues: Shikimate kinase (290 aa).

An ATP-binding site is contributed by 81–91 (PIASGLKSSSA).

This sequence belongs to the GHMP kinase family. Archaeal shikimate kinase subfamily.

The protein localises to the cytoplasm. It catalyses the reaction shikimate + ATP = 3-phosphoshikimate + ADP + H(+). The protein operates within metabolic intermediate biosynthesis; chorismate biosynthesis; chorismate from D-erythrose 4-phosphate and phosphoenolpyruvate: step 5/7. In Methanocella arvoryzae (strain DSM 22066 / NBRC 105507 / MRE50), this protein is Shikimate kinase.